A 370-amino-acid chain; its full sequence is ADP-ribosylhydrolase ARH3 (370 aa).

Mg(2+) is bound at residue glutamate 47. Residue threonine 70 is modified to Phosphothreonine. 3 residues coordinate Mg(2+): threonine 82, aspartate 83, and aspartate 84. Residue aspartate 83 participates in substrate binding. Residues 152 to 158, histidine 188, leucine 241, and isoleucine 277 contribute to the substrate site; that span reads KGSYGNG. Residues aspartate 320, aspartate 322, and threonine 323 each contribute to the Mg(2+) site.

It belongs to the ADP-ribosylglycohydrolase family. In terms of assembly, monomer. Mg(2+) is required as a cofactor. In terms of tissue distribution, ubiquitous.

The protein resides in the nucleus. It localises to the cytoplasm. The protein localises to the chromosome. Its subcellular location is the mitochondrion matrix. It catalyses the reaction [(1''-&gt;2')-ADP-alpha-D-ribose](n) + H2O = [(1''-&gt;2')-ADP-alpha-D-ribose](n-1) + ADP-D-ribose. The enzyme catalyses 1''-O-acetyl-ADP-alpha-D-ribose + H2O = ADP-D-ribose + acetate + H(+). The catalysed reaction is O-(ADP-D-ribosyl)-L-seryl-[protein] + H2O = ADP-D-ribose + L-seryl-[protein]. It carries out the reaction alpha-NAD(+) + H2O = ADP-D-ribose + nicotinamide + H(+). The protein undergoes a dramatic conformational switch from closed to open states upon substrate-binding, which enables specific substrate recognition for the 1''-O-linkage. The glutamate flap (Glu-47) blocks substrate entrance to Mg(2+) in the unliganded closed state. In presence of substrate, Glu-47 is ejected from the active site: this closed-to-open transition significantly widens the substrate-binding channel and precisely positions the scissile 1''-O-linkage for cleavage while securing tightly 2'- and 3'-hydroxyls of ADP-ribose. In terms of biological role, ADP-ribosylhydrolase that preferentially hydrolyzes the scissile alpha-O-linkage attached to the anomeric C1'' position of ADP-ribose and acts on different substrates, such as proteins ADP-ribosylated on serine and threonine, free poly(ADP-ribose) and O-acetyl-ADP-D-ribose. Specifically acts as a serine mono-ADP-ribosylhydrolase by mediating the removal of mono-ADP-ribose attached to serine residues on proteins, thereby playing a key role in DNA damage response. Serine ADP-ribosylation of proteins constitutes the primary form of ADP-ribosylation of proteins in response to DNA damage. Does not hydrolyze ADP-ribosyl-arginine, -cysteine, -diphthamide, or -asparagine bonds. Also able to degrade protein free poly(ADP-ribose), which is synthesized in response to DNA damage: free poly(ADP-ribose) acts as a potent cell death signal and its degradation by ADPRHL2 protects cells from poly(ADP-ribose)-dependent cell death, a process named parthanatos. Also hydrolyzes free poly(ADP-ribose) in mitochondria. Specifically digests O-acetyl-ADP-D-ribose, a product of deacetylation reactions catalyzed by sirtuins. Specifically degrades 1''-O-acetyl-ADP-D-ribose isomer, rather than 2''-O-acetyl-ADP-D-ribose or 3''-O-acetyl-ADP-D-ribose isomers. The sequence is that of ADP-ribosylhydrolase ARH3 (Adprs) from Mus musculus (Mouse).